A 463-amino-acid polypeptide reads, in one-letter code: Phosphomannomutase/phosphoglucomutase (463 aa).

Y17 provides a ligand contact to alpha-D-glucose 1-phosphate. An alpha-D-mannose 1-phosphate-binding site is contributed by Y17. Residue S108 is the Non-phosphorylated intermediate of the active site. Residues S108, D242, D244, and D246 each contribute to the Mg(2+) site. S108 carries the phosphoserine modification. Alpha-D-glucose 1-phosphate is bound by residues K285, H308, 325 to 329 (EMSGH), and 421 to 425 (RASNT). Residues H308, 325–329 (EMSGH), and 421–425 (RASNT) each bind alpha-D-mannose 1-phosphate.

The protein belongs to the phosphohexose mutase family. As to quaternary structure, monomer. It depends on Mg(2+) as a cofactor.

The enzyme catalyses alpha-D-mannose 1-phosphate = D-mannose 6-phosphate. It catalyses the reaction alpha-D-glucose 1-phosphate = alpha-D-glucose 6-phosphate. It participates in nucleotide-sugar biosynthesis; GDP-alpha-D-mannose biosynthesis; alpha-D-mannose 1-phosphate from D-fructose 6-phosphate: step 2/2. It functions in the pathway bacterial outer membrane biogenesis; lipopolysaccharide biosynthesis. Its function is as follows. Highly reversible phosphoryltransferase. The phosphomannomutase activity produces a precursor for alginate polymerization, the alginate layer causes a mucoid phenotype and provides a protective barrier against host immune defenses and antibiotics. Also involved in core lipopolysaccaride (LPS) biosynthesis due to its phosphoglucomutase activity. Essential for rhamnolipid production, an exoproduct correlated with pathogenicity. Required for biofilm production. The reaction proceeds via 2 processive phosphoryl transferase reactions; first from enzyme-phospho-Ser-108 to the substrate (generating a bisphosphorylated substrate intermediate and a dephosphorylated enzyme), a 180 degree rotation of the intermediate (probably aided by movement of domain 4), and subsequent transfer of phosphate back to the enzyme. This is Phosphomannomutase/phosphoglucomutase (algC) from Pseudomonas aeruginosa (strain UCBPP-PA14).